A 217-amino-acid polypeptide reads, in one-letter code: Frizzled-8 (217 aa).

The Extracellular portion of the chain corresponds to 1-26 (AGAAELQPELAVAEHVRYESTGPALC). The helical transmembrane segment at 27–47 (TVVFLLVYFFGMASSIWWVIL) threads the bilayer. The Cytoplasmic portion of the chain corresponds to 48–69 (SLTWFLAAGMKWGNEAIAGYAQ). Residues 70-90 (YFHLAAWLLPSVKSIAVLALS) form a helical membrane-spanning segment. Residues 91–113 (SVDGDPVAGICYVGNQSLENLRG) lie on the Extracellular side of the membrane. N105 carries an N-linked (GlcNAc...) asparagine glycan. A helical membrane pass occupies residues 114–134 (FVLAPLVVYLFTGSLFLLAGF). The Cytoplasmic portion of the chain corresponds to 135-160 (VSLFRIRSVIKQGGTKTDKLEKLMIR). Residues 161 to 181 (IGIFTVLYTVPATIVIACYIY) form a helical membrane-spanning segment. Residues 182–209 (EQHNREAWEQAQNCSCPGDPHRPKPDYA) are Extracellular-facing. A glycan (N-linked (GlcNAc...) asparagine) is linked at N194. The chain crosses the membrane as a helical span at residues 210 to 217 (VFMLKYFM).

The protein belongs to the G-protein coupled receptor Fz/Smo family.

It localises to the membrane. The protein resides in the cell membrane. In terms of biological role, receptor for Wnt proteins. Most of frizzled receptors are coupled to the beta-catenin canonical signaling pathway, which leads to the activation of disheveled proteins, inhibition of GSK-3 kinase, nuclear accumulation of beta-catenin and activation of Wnt target genes. A second signaling pathway involving PKC and calcium fluxes has been seen for some family members, but it is not yet clear if it represents a distinct pathway or if it can be integrated in the canonical pathway, as PKC seems to be required for Wnt-mediated inactivation of GSK-3 kinase. Both pathways seem to involve interactions with G-proteins. May be involved in transduction and intercellular transmission of polarity information during tissue morphogenesis and/or in differentiated tissues. This Gallus gallus (Chicken) protein is Frizzled-8 (FZD8).